We begin with the raw amino-acid sequence, 254 residues long: HTH-type transcriptional regulator GolR (254 aa).

The HTH deoR-type domain occupies 3-58 (PFERQNKIIHLLDQNNKITVPELSRILDVSISTIRNDLSALEESGMIKKVHGGAVL). A DNA-binding region (H-T-H motif) is located at residues 20-39 (ITVPELSRILDVSISTIRND).

Functionally, involved in the glycerol metabolism. Repressor of the gol operon for glycerol metabolism. This chain is HTH-type transcriptional regulator GolR, found in Listeria innocua serovar 6a (strain ATCC BAA-680 / CLIP 11262).